Reading from the N-terminus, the 412-residue chain is Cathepsin D (412 aa).

Positions 1–20 (MQPSSLLPLALCLLAAPASA) are cleaved as a signal peptide. A propeptide spans 21 to 64 (LVRIPLHKFTSIRRTMSEVGGSVEDLIAKGPVSKYSQAVPAVTE) (activation peptide). A glycan (O-linked (GalNAc...) threonine) is linked at threonine 63. Positions 79–407 (YYGEIGIGTP…DRDNNRVGFA (329 aa)) constitute a Peptidase A1 domain. Cystine bridges form between cysteine 91–cysteine 160 and cysteine 110–cysteine 117. Aspartate 97 is a catalytic residue. N-linked (GlcNAc...) asparagine glycans are attached at residues asparagine 134 and asparagine 263. An intrachain disulfide couples cysteine 286 to cysteine 290. The active site involves aspartate 295. Cysteine 329 and cysteine 366 form a disulfide bridge.

The protein belongs to the peptidase A1 family. As to quaternary structure, consists of a light chain and a heavy chain. Interacts with ADAM30; this leads to activation of CTSD. Interacts with GRN; stabilizes CTSD; increases its proteolytic activity. Post-translationally, N- and O-glycosylated. In terms of processing, undergoes proteolytic cleavage and activation by ADAM30. As well as the major heavy chain which starts at Leu-169, 2 minor forms starting at Gly-170 and Gly-171 have been identified. An additional form starting at Ala-168 has also been identified. Expressed in the aorta extracellular space (at protein level). Expressed in liver (at protein level).

The protein localises to the lysosome. Its subcellular location is the melanosome. It localises to the secreted. It is found in the extracellular space. The enzyme catalyses Specificity similar to, but narrower than, that of pepsin A. Does not cleave the 4-Gln-|-His-5 bond in B chain of insulin.. Functionally, acid protease active in intracellular protein breakdown. Plays a role in APP processing following cleavage and activation by ADAM30 which leads to APP degradation. Involved in the pathogenesis of several diseases such as breast cancer and possibly Alzheimer disease. This is Cathepsin D (CTSD) from Homo sapiens (Human).